The primary structure comprises 164 residues: MSGNNFNASNADTDHLPQVSILAQYIKDLSFENPNAPAVYQWQTQPHIEVQFNIGTQPMAQDVYEVALKVDVSAKADEGVVFHVELVYNGLFAIKNVPADQIQPFLYIEAPRILFPFVRRILADSVRDGNFPPLMLEPIDFAALYMQQTEQQDMLSNTEPAGQA.

This sequence belongs to the SecB family. In terms of assembly, homotetramer, a dimer of dimers. One homotetramer interacts with 1 SecA dimer.

The protein localises to the cytoplasm. Functionally, one of the proteins required for the normal export of preproteins out of the cell cytoplasm. It is a molecular chaperone that binds to a subset of precursor proteins, maintaining them in a translocation-competent state. It also specifically binds to its receptor SecA. This chain is Protein-export protein SecB, found in Zymomonas mobilis subsp. mobilis (strain ATCC 31821 / ZM4 / CP4).